The primary structure comprises 273 residues: Tetraspanin-8 (273 aa).

Residues 1–7 (MARCSNN) lie on the Cytoplasmic side of the membrane. A helical membrane pass occupies residues 8-28 (LVGILNFLVFLLSIPILAGGI). The Extracellular portion of the chain corresponds to 29–45 (WLSQKGSTECERFLDKP). A helical transmembrane segment spans residues 46 to 66 (VIALGVFLMVVAIAGLIGSCC). Topologically, residues 67–75 (RVTWLLWVY) are cytoplasmic. A helical transmembrane segment spans residues 76-96 (LFVMFLLILLVFCITVFAFVV). Residues 97–235 (TNKGAGEAIE…NVKSAWKKVA (139 aa)) are Extracellular-facing. An N-linked (GlcNAc...) asparagine glycan is attached at N192. Residues 236–256 (IVNIVFLVFLIIVYSVGCCAF) traverse the membrane as a helical segment. Topologically, residues 257 to 273 (RNNKRDDSYSRTYGYKP) are cytoplasmic.

It belongs to the tetraspanin (TM4SF) family.

The protein localises to the membrane. Its function is as follows. May be involved in the regulation of cell differentiation. In Arabidopsis thaliana (Mouse-ear cress), this protein is Tetraspanin-8 (TET8).